A 603-amino-acid chain; its full sequence is Rab proteins geranylgeranyltransferase component A (603 aa).

At Ser470 the chain carries Phosphoserine.

It belongs to the Rab GDI family.

Substrate-binding subunit (component A) of the Rab geranylgeranyltransferase (GGTase) complex. Binds unprenylated Rab proteins and presents the substrate peptide to the catalytic component B. The component A is thought to be regenerated by transferring its prenylated Rab back to the donor membrane. This Saccharomyces cerevisiae (strain ATCC 204508 / S288c) (Baker's yeast) protein is Rab proteins geranylgeranyltransferase component A (MRS6).